The chain runs to 206 residues: KH domain-containing protein 3 (206 aa).

Residues 1 to 40 (MDTPRRFPTLVQLMQPKAMPVEVLGHLPKRFSWFHSEFLK) are involved in RNA binding. Positions 40–103 (KNPKVVRLEV…SYQEDTIKMI (64 aa)) constitute a KH; atypical domain. A compositionally biased stretch (basic and acidic residues) spans 144–153 (GTQRSVEVRE). Residues 144–206 (GTQRSVEVRE…EDTRAPVTRL (63 aa)) form a disordered region. At threonine 145 the chain carries Phosphothreonine. Residues 166–183 (TGTQQSLEAANQSGTQRS) show a composition bias toward polar residues. Serine 171 carries the post-translational modification Phosphoserine.

Belongs to the KHDC1 family. Component of the subcortical maternal complex (SCMC), at least composed of NLRP5, KHDC3L, OOEP, and TLE6. Within the complex, interacts with NLRP5, KHDC3L and TLE6. The SCMC may facilitate translocation of its components between the nuclear and cytoplasmic compartments. Forms a scaffold complex with OOEP/FLOPED, and interacts with BLM and TRIM25 at DNA replication forks. Interacts with PARP1; the interaction is increased following the formation of DNA double-strand breaks. Interacts with NUMA1.

The protein localises to the cytoplasm. It localises to the cell cortex. Its subcellular location is the nucleus. The protein resides in the mitochondrion. It is found in the cytoskeleton. The protein localises to the microtubule organizing center. It localises to the centrosome. Its subcellular location is the chromosome. Component of the subcortical maternal complex (SCMC), a multiprotein complex that plays a key role in early embryonic development. The SCMC complex is a structural constituent of cytoplasmic lattices, which consist in fibrous structures found in the cytoplasm of oocytes and preimplantation embryos. They are required to store maternal proteins critical for embryonic development, such as proteins that control epigenetic reprogramming of the preimplantation embryo, and prevent their degradation or activation. KHDC3 ensures proper spindle assembly by regulating the localization of AURKA via RHOA signaling and of PLK1 via a RHOA-independent process. Required for the localization of MAD2L1 to kinetochores to enable spindle assembly checkpoint function. As part of the OOEP-KHDC3 scaffold, recruits BLM and TRIM25 to DNA replication forks, thereby promoting the ubiquitination of BLM by TRIM25, enhancing BLM retainment at replication forks and therefore promoting stalled replication fork restart. Regulates homologous recombination-mediated DNA repair via recruitment of RAD51 to sites of DNA double-strand breaks, and sustainment of PARP1 activity, which in turn modulates downstream ATM or ATR activation. Activation of ATM or ATR in response to DNA double-strand breaks may be cell-type specific. Its role in DNA double-strand break repair is independent of its role in restarting stalled replication forks. Promotes neural stem cell neurogenesis and neuronal differentiation in the hippocampus. May regulate normal development of learning, memory and anxiety. Capable of binding RNA. This Macaca mulatta (Rhesus macaque) protein is KH domain-containing protein 3 (KHDC3L).